The primary structure comprises 195 residues: NADH-quinone oxidoreductase subunit B (195 aa).

Positions 74, 75, 139, and 169 each coordinate [4Fe-4S] cluster.

The protein belongs to the complex I 20 kDa subunit family. In terms of assembly, NDH-1 is composed of 14 different subunits. Subunits NuoB, C, D, E, F, and G constitute the peripheral sector of the complex. Requires [4Fe-4S] cluster as cofactor.

The protein localises to the cell inner membrane. The catalysed reaction is a quinone + NADH + 5 H(+)(in) = a quinol + NAD(+) + 4 H(+)(out). Its function is as follows. NDH-1 shuttles electrons from NADH, via FMN and iron-sulfur (Fe-S) centers, to quinones in the respiratory chain. The immediate electron acceptor for the enzyme in this species is believed to be ubiquinone. Couples the redox reaction to proton translocation (for every two electrons transferred, four hydrogen ions are translocated across the cytoplasmic membrane), and thus conserves the redox energy in a proton gradient. This chain is NADH-quinone oxidoreductase subunit B, found in Methylorubrum populi (strain ATCC BAA-705 / NCIMB 13946 / BJ001) (Methylobacterium populi).